The primary structure comprises 409 residues: Testis-expressed protein 13A (409 aa).

The interval 92–408 (WLHGFAKLHK…CGKGIWLQKP (317 aa)) is required for repression of transcription. The segment at 347-374 (GGPHRIDHQEHPRDRRYSEPHQQRPPVY) is disordered. The span at 348 to 368 (GPHRIDHQEHPRDRRYSEPHQ) shows a compositional bias: basic and acidic residues. The RanBP2-type zinc finger occupies 376–400 (RPGDWDCPWCNAVNFSRRDTCFDCG). Zn(2+)-binding residues include C382, C385, C396, and C399.

The protein belongs to the TEX13 family. As to quaternary structure, interacts with CNOT1; the interaction may inhibit CNOT1 binding to mRNA and subsequently CNOT1-mediated mRNA degradation. Testis specific.

Functionally, binds to ssRNA containing the consensus sequence 5'-AGGUAA-3'. Plays a role in transcriptional repression. Required for rapid sperm motility and timely degradation of mRNA via its interaction with CNOT1. The protein is Testis-expressed protein 13A of Homo sapiens (Human).